The primary structure comprises 216 residues: UPF0502 protein VCM66_A0698 (216 aa).

The protein belongs to the UPF0502 family.

The polypeptide is UPF0502 protein VCM66_A0698 (Vibrio cholerae serotype O1 (strain M66-2)).